A 360-amino-acid chain; its full sequence is Photosystem II protein D1 2 (360 aa).

Transmembrane regions (helical) follow at residues 29–46 (YIGW…AATT), 118–133 (HFLT…EWEL), and 142–156 (WICL…AATA). Chlorophyll a is bound at residue His118. Residue Tyr126 participates in pheophytin a binding. Positions 170 and 189 each coordinate [CaMn4O5] cluster. The helical transmembrane segment at 197–218 (FHMLGVAGVFGGSLFSAMHGSL) threads the bilayer. Residue His198 participates in chlorophyll a binding. A quinone contacts are provided by residues His215 and 264-265 (SF). A Fe cation-binding site is contributed by His215. His272 provides a ligand contact to Fe cation. Residues 274–288 (FLAAWPVIGIWFTAL) traverse the membrane as a helical segment. [CaMn4O5] cluster is bound by residues His332, Glu333, Asp342, and Ala344. Positions 345–360 (AGEVAPVAISAPAING) are excised as a propeptide.

The protein belongs to the reaction center PufL/M/PsbA/D family. In terms of assembly, PSII is composed of 1 copy each of membrane proteins PsbA, PsbB, PsbC, PsbD, PsbE, PsbF, PsbH, PsbI, PsbJ, PsbK, PsbL, PsbM, PsbT, PsbX, PsbY, PsbZ, Psb30/Ycf12, peripheral proteins PsbO, CyanoQ (PsbQ), PsbU, PsbV and a large number of cofactors. It forms dimeric complexes. The D1/D2 heterodimer binds P680, chlorophylls that are the primary electron donor of PSII, and subsequent electron acceptors. It shares a non-heme iron and each subunit binds pheophytin, quinone, additional chlorophylls, carotenoids and lipids. D1 provides most of the ligands for the Mn4-Ca-O5 cluster of the oxygen-evolving complex (OEC). There is also a Cl(-1) ion associated with D1 and D2, which is required for oxygen evolution. The PSII complex binds additional chlorophylls, carotenoids and specific lipids. is required as a cofactor. Post-translationally, tyr-161 forms a radical intermediate that is referred to as redox-active TyrZ, YZ or Y-Z. In terms of processing, C-terminally processed by CtpA; processing is essential to allow assembly of the oxygen-evolving complex and thus photosynthetic growth.

Its subcellular location is the cellular thylakoid membrane. The enzyme catalyses 2 a plastoquinone + 4 hnu + 2 H2O = 2 a plastoquinol + O2. Photosystem II (PSII) is a light-driven water:plastoquinone oxidoreductase that uses light energy to abstract electrons from H(2)O, generating O(2) and a proton gradient subsequently used for ATP formation. It consists of a core antenna complex that captures photons, and an electron transfer chain that converts photonic excitation into a charge separation. The D1/D2 (PsbA/PsbD) reaction center heterodimer binds P680, the primary electron donor of PSII as well as several subsequent electron acceptors. The protein is Photosystem II protein D1 2 of Nostoc sp. (strain PCC 7120 / SAG 25.82 / UTEX 2576).